The sequence spans 245 residues: 1-(5-phosphoribosyl)-5-[(5-phosphoribosylamino)methylideneamino] imidazole-4-carboxamide isomerase (245 aa).

D7 (proton acceptor) is an active-site residue. Catalysis depends on D129, which acts as the Proton donor.

This sequence belongs to the HisA/HisF family.

It is found in the cytoplasm. It carries out the reaction 1-(5-phospho-beta-D-ribosyl)-5-[(5-phospho-beta-D-ribosylamino)methylideneamino]imidazole-4-carboxamide = 5-[(5-phospho-1-deoxy-D-ribulos-1-ylimino)methylamino]-1-(5-phospho-beta-D-ribosyl)imidazole-4-carboxamide. Its pathway is amino-acid biosynthesis; L-histidine biosynthesis; L-histidine from 5-phospho-alpha-D-ribose 1-diphosphate: step 4/9. The polypeptide is 1-(5-phosphoribosyl)-5-[(5-phosphoribosylamino)methylideneamino] imidazole-4-carboxamide isomerase (Erwinia tasmaniensis (strain DSM 17950 / CFBP 7177 / CIP 109463 / NCPPB 4357 / Et1/99)).